We begin with the raw amino-acid sequence, 362 residues long: GDSL esterase/lipase At5g18430 (362 aa).

An N-terminal signal peptide occupies residues 1–19; the sequence is MTISTVIAFMSMFLVFVMS. Ser35 functions as the Nucleophile in the catalytic mechanism. N-linked (GlcNAc...) asparagine glycosylation occurs at Asn117. Residues Asp327 and His330 contribute to the active site. Asn355 carries N-linked (GlcNAc...) asparagine glycosylation.

It belongs to the 'GDSL' lipolytic enzyme family.

Its subcellular location is the secreted. In Arabidopsis thaliana (Mouse-ear cress), this protein is GDSL esterase/lipase At5g18430.